A 207-amino-acid chain; its full sequence is Ras-related protein Rab7 (207 aa).

GTP-binding positions include 15 to 22 (GDSSVGKT), 34 to 40 (SNQYKAT), 63 to 67 (DTAGQ), 125 to 128 (NKVD), and 156 to 157 (AK). Residues 37–45 (YKATIGADF) carry the Effector region motif. S-geranylgeranyl cysteine attachment occurs at residues C205 and C207.

This sequence belongs to the small GTPase superfamily. Rab family. As to expression, expressed in eye (at protein level).

It localises to the early endosome membrane. It is found in the late endosome membrane. The protein resides in the lysosome membrane. The protein localises to the cytoplasmic vesicle. Its subcellular location is the autophagosome membrane. It localises to the autolysosome membrane. It is found in the presynapse. The protein resides in the perikaryon. The catalysed reaction is GTP + H2O = GDP + phosphate + H(+). Small GTPase which cycles between active GTP-bound and inactive GDP-bound states. In its active state, binds to a variety of effector proteins playing a key role in the regulation of endo-lysosomal trafficking. Involved in microtubule minus and plus end-directed endosomal migration and positioning, and endosome-lysosome transport through different protein-protein interaction cascades. Governs early-to-late endosomal to lysosomal maturation. Controls endocytic cargo sorting towards the late endosome facilitating its eventual endolysosomal-mediated degradation. Together with Rab2 involved in promoting fusion of autophagosomes and endosomes with lysosomes probably through recruitment of the HOPS tethering complex. Involved in biosynthetic transport to lysosomes. Involved in establishing morphogen concentration gradients, for example of the TGF-beta homolog dpp/decapentaplegic, during pattern formation and organogenesis. Together with the Mon1-Ccz1 complex, required for autolysosome formation in fat cells and autophagic degradation during starvation-induced basal and developmental autophagy. Together with Mon1, regulates levels of postsynaptic glutamate receptor GluRIIA in the neuromuscular junction (NMJ) presynapse. Required for autophagocytosis-dependent remodeling of myofibrils and transverse-tubules (T-tubules) during metamorphosis. Involved in intracellular trafficking of the carbohydrate transporter Tret1 in glial cells of the blood brain barrier, influencing its subcellular localization and protein levels. In Drosophila melanogaster (Fruit fly), this protein is Ras-related protein Rab7.